A 394-amino-acid chain; its full sequence is S-adenosylmethionine synthase (394 aa).

Residue His-16 participates in ATP binding. Asp-18 contributes to the Mg(2+) binding site. Residue Glu-44 participates in K(+) binding. Glu-57 and Gln-99 together coordinate L-methionine. A flexible loop region spans residues 99–109 (QSPDIAQGVDE). Residues 173–175 (DAK), 240–241 (RF), Asp-249, 255–256 (RK), Ala-272, and Lys-276 each bind ATP. L-methionine is bound at residue Asp-249. An L-methionine-binding site is contributed by Lys-280.

Belongs to the AdoMet synthase family. In terms of assembly, homotetramer; dimer of dimers. Mg(2+) is required as a cofactor. It depends on K(+) as a cofactor.

It localises to the cytoplasm. It catalyses the reaction L-methionine + ATP + H2O = S-adenosyl-L-methionine + phosphate + diphosphate. It participates in amino-acid biosynthesis; S-adenosyl-L-methionine biosynthesis; S-adenosyl-L-methionine from L-methionine: step 1/1. Catalyzes the formation of S-adenosylmethionine (AdoMet) from methionine and ATP. The overall synthetic reaction is composed of two sequential steps, AdoMet formation and the subsequent tripolyphosphate hydrolysis which occurs prior to release of AdoMet from the enzyme. This is S-adenosylmethionine synthase from Lacticaseibacillus paracasei (strain ATCC 334 / BCRC 17002 / CCUG 31169 / CIP 107868 / KCTC 3260 / NRRL B-441) (Lactobacillus paracasei).